The chain runs to 358 residues: MFDQLDIVEERYEQLNELLSDPDVVSDSNKLREYSKEQSDLQKTVDVYRQYKQNKEDIDEIVEMLSETSDKEEVDMLKADMNELKDTLPGLEEELKMLLIPKDPNDDKNVVVEIRAAAGGDEAAIFAGDLYRMYTRFSEGLGYKTGVIEMNDSDHGGFKEISFTINGQGAYSKLKYENGAHRVQRVPETESGGRIHTSTATVAVLPEAEDVEVDIKDADLKIETYRSSGAGGQHVNTTDSAVRITHLPTGIIATSSEKSQIQNREKALKVLKARVYDMKLQEEQEKYDSERKSAVGTGDRSERIRTYNYPQNRVTDHRIGLTIQKLDQIVEGKLDEIIDALTMSEQTEKLKELNNVDL.

Residue Gln-233 is modified to N5-methylglutamine.

It belongs to the prokaryotic/mitochondrial release factor family. Methylated by PrmC. Methylation increases the termination efficiency of RF1.

It is found in the cytoplasm. Peptide chain release factor 1 directs the termination of translation in response to the peptide chain termination codons UAG and UAA. This Staphylococcus carnosus (strain TM300) protein is Peptide chain release factor 1.